A 1161-amino-acid chain; its full sequence is Integrin alpha-D (1161 aa).

Residues Met-1–Gly-17 form the signal peptide. Residues Phe-18–Asn-1099 lie on the Extracellular side of the membrane. FG-GAP repeat units lie at residues Asn-19–Pro-76 and Ile-77–Thr-136. The N-linked (GlcNAc...) asparagine glycan is linked to Asn-59. Cys-67 and Cys-74 form a disulfide bridge. N-linked (GlcNAc...) asparagine glycosylation is found at Asn-87 and Asn-99. Cys-106 and Cys-124 form a disulfide bridge. A VWFA domain is found at Asp-150–Ile-332. FG-GAP repeat units lie at residues Gln-339–Ile-390, Asn-391–Trp-442, Arg-443–Trp-503, Asp-506–Ser-564, and Gln-569–Val-629. Residue Asn-391 is glycosylated (N-linked (GlcNAc...) asparagine). The Ca(2+) site is built by Asp-465, Asp-467, Asp-469, Asp-473, Asp-529, Asn-531, Asp-533, Asp-537, Asp-592, Asp-596, and Asp-600. Residues Cys-654 and Cys-709 are joined by a disulfide bond. N-linked (GlcNAc...) asparagine glycans are attached at residues Asn-690 and Asn-732. Intrachain disulfides connect Cys-768–Cys-774 and Cys-845–Cys-860. 2 N-linked (GlcNAc...) asparagine glycosylation sites follow: Asn-872 and Asn-956. Cystine bridges form between Cys-993-Cys-1017 and Cys-1022-Cys-1027. Asn-1045 carries an N-linked (GlcNAc...) asparagine glycan. A helical transmembrane segment spans residues Ala-1100–Ala-1120. Residues Thr-1121–Ser-1161 are Cytoplasmic-facing. The GFFKR motif signature appears at Gly-1126–Arg-1130.

This sequence belongs to the integrin alpha chain family. As to quaternary structure, heterodimer of an alpha and a beta subunit. Alpha-D associates with beta-2. As to expression, expressed moderately on myelomonocytic cell lines and subsets of peripheral blood leukocytes and strongly on tissue-specialized cells, including macrophages foam cells within atherosclerotic plaques, and on splenic red pulp macrophages.

The protein localises to the membrane. Functionally, integrin alpha-D/beta-2 is a receptor for ICAM3 and VCAM1. May play a role in the atherosclerotic process such as clearing lipoproteins from plaques and in phagocytosis of blood-borne pathogens, particulate matter, and senescent erythrocytes from the blood. The chain is Integrin alpha-D (ITGAD) from Homo sapiens (Human).